The following is a 279-amino-acid chain: MTENDNEVVEVVDDDEAVVSESPVDVDTATEAEADTETDESNETTPTASDAAGDETTTQTGNESADAEPDDELEGPTFDEDVMPDEEADLLIPVEDYLSAGVHIGTQQKTSDMERFIHRVRDDGLYVLDVSQTDSRIRTAANFLANYNPDQMLVTSSRQYGRFPAKKFADAVGARARTGRFIPGTLTNPDYAGYIEPDVVVVTDPIGDAQAVKEAITVGIPVIAMCDSNNQTSNTDLVVPTNNKGRRALSVVYWLLANETLDRRGADSLYALDEFEAEI.

3 stretches are compositionally biased toward acidic residues: residues Met1–Val18, Thr28–Asn42, and Ala65–Asp81. A disordered region spans residues Met1–Asp81.

Belongs to the universal ribosomal protein uS2 family.

The chain is Small ribosomal subunit protein uS2 from Haloquadratum walsbyi (strain DSM 16790 / HBSQ001).